We begin with the raw amino-acid sequence, 1037 residues long: MERARRLAYRGIVKRLVNDTKRHRNAETPHLVPHAPARYVSSLSPFISTPRSVNHTAAFGRHQQTRSISVDAVKPSDTFPRRHNSATPDEQTHMAKFCGFDHIDSLIDATVPKSIRLDSMKFSKFDAGLTESQMIQHMVDLASKNKVFKSFIGMGYYNTHVPTVILRNIMENPAWYTQYTPYQAEISQGRLESLLNFQTVITDLTGLPMSNASLLDEGTAAAEAMAMCNNILKGKKKTFVIASNCHPQTIDVCKTRADGFDLKVVTSDLKDIDYSSGDVCGVLVQYPGTEGEVLDYAEFVKNAHANGVKVVMATDLLALTVLKPPGEFGADIVVGSAQRFGVPMGYGGPHAAFLATSQEYKRMMPGRIIGISVDSSGKQALRMAMQTREQHIRRDKATSNICTAQALLANMAAMYAVYHGPAGLKSIAQRVHGLAGIFSLGLNKLGVAEVQELPFFDTVKIKCSDAHAIADAASKSEINLRVVDSTTITASFDETTTLDDVDKLFKVFASGKPVPFTAESLAPEVQNSIPSSLTRESPYLTHPIFNMYHTEHELLRYIHKLQSKDLSLCHSMIPLGSCTMKLNATTEMMPVTWPSFTDIHPFAPVEQAQGYQEMFENLGDLLCTITGFDSFSLQPNAGAAGEYAGLMVIRAYHMSRGDHHRNVCIIPVSAHGTNPASAAMCGMKIITVGTDAKGNINIEEVRKAAEANKDNLAALMVTYPSTHGVYEEGIDEICNIIHENGGQVYMDGANMNAQVGLTSPGFIGADVCHLNLHKTFCIPHGGGGPGMGPIGVKNHLAPFLPSHPVIPTGGIPQPEKTAPLGAISAAPWGSALILPISYTYIAMMGSGGLTDASKIAILNANYMAKRLEKHYPVLFRGVNGTVAHEFIIDLRGFKNTAGIEPEDVAKRLMDYGFHGPTMSWPVPGTLMIEPTESESKAELDRFCDALISIREEIAQIEKGNADVQNNVLKGAPHPPSLLMADTWKKPYSREYAAFPAPWLRSSKFWPTTGRVDNVYGDRKLVCTLLPEEEQVAAAVSA.

Residues 1–67 (MERARRLAYR…AFGRHQQTRS (67 aa)) constitute a mitochondrion transit peptide. C98 is modified (S-glutathionyl cysteine; transient). An S-glutathionyl cysteine mark is found at C402 and C463. At K774 the chain carries N6-(pyridoxal phosphate)lysine. Residues C777, C943, and C1022 each carry the S-glutathionyl cysteine; transient modification.

It belongs to the GcvP family. Homodimer. The glycine cleavage system is composed of four proteins: P, T, L and H. Requires pyridoxal 5'-phosphate as cofactor. Glutathionylated at Cys-98, Cys-777, Cys-943 and Cys-1022 after S-nitrosoglutathione treatment. In terms of processing, S-nitrosylated at unknown positions by nitric oxide. In terms of tissue distribution, expressed in leaves. Detected in roots, stems, flowers and siliques.

The protein localises to the mitochondrion. The enzyme catalyses N(6)-[(R)-lipoyl]-L-lysyl-[glycine-cleavage complex H protein] + glycine + H(+) = N(6)-[(R)-S(8)-aminomethyldihydrolipoyl]-L-lysyl-[glycine-cleavage complex H protein] + CO2. Its activity is regulated as follows. Inhibited by harpin, S-nitrosoglutathione (GSNO), nitric oxide, N-ethylmaleimide and 5,5'-dithiobis-(2-nitrobenzoic acid). In terms of biological role, the glycine decarboxylase (GDC) or glycine cleavage system catalyzes the degradation of glycine. The P protein binds the alpha-amino group of glycine through its pyridoxal phosphate cofactor; CO(2) is released and the remaining methylamine moiety is then transferred to the lipoamide cofactor of the H protein. This is Glycine dehydrogenase (decarboxylating) 1, mitochondrial (GLDP1) from Arabidopsis thaliana (Mouse-ear cress).